A 625-amino-acid chain; its full sequence is Isocitrate dehydrogenase kinase/phosphatase (625 aa).

Residues 325–331 and Lys-346 each bind ATP; that span reads APGIKGM. The active site involves Asp-381. The interval 596–625 is disordered; that stretch reads RRHSPGRNDHELLTHLPPEPMLTGLSGMTP.

It belongs to the AceK family.

Its subcellular location is the cytoplasm. It carries out the reaction L-seryl-[isocitrate dehydrogenase] + ATP = O-phospho-L-seryl-[isocitrate dehydrogenase] + ADP + H(+). Its function is as follows. Bifunctional enzyme which can phosphorylate or dephosphorylate isocitrate dehydrogenase (IDH) on a specific serine residue. This is a regulatory mechanism which enables bacteria to bypass the Krebs cycle via the glyoxylate shunt in response to the source of carbon. When bacteria are grown on glucose, IDH is fully active and unphosphorylated, but when grown on acetate or ethanol, the activity of IDH declines drastically concomitant with its phosphorylation. The polypeptide is Isocitrate dehydrogenase kinase/phosphatase (Polaromonas sp. (strain JS666 / ATCC BAA-500)).